The primary structure comprises 117 residues: Large ribosomal subunit protein bL20c (117 aa).

The protein belongs to the bacterial ribosomal protein bL20 family.

It is found in the plastid. Its subcellular location is the chloroplast. In terms of biological role, binds directly to 23S ribosomal RNA and is necessary for the in vitro assembly process of the 50S ribosomal subunit. It is not involved in the protein synthesizing functions of that subunit. The chain is Large ribosomal subunit protein bL20c from Acorus calamus (Sweet flag).